Here is a 449-residue protein sequence, read N- to C-terminus: Putative transporter C83.11 (449 aa).

The next 9 helical transmembrane spans lie at 7-27, 47-67, 84-104, 109-129, 136-156, 164-184, 205-225, 255-275, and 278-298; these read LSHILFHEKVGFLLLCLLWYI, VTLTFLQFGFVAFFSAVCLLF, VLYTTLPLSIFQIGGHVFGSL, IPVSTVHTVKALSPLFTVLAY, VYSAMTYFSLVPLTFGVTLAC, IVGLLYALISTCIFVSQNIFG, LNLLLYSSGVAFIVMIPVWLY, ILAFTLLSIISPVAYSIASLI, and IFVIVVSIIWFQQATNFTQGS. Serine 348 and serine 352 each carry phosphoserine. Residue tyrosine 355 is modified to Phosphotyrosine. Over residues 382–415 the composition is skewed to polar residues; the sequence is NSVYSNEGVTSSVSGNATPASVRQSTQNDFSNSN. Positions 382–416 are disordered; the sequence is NSVYSNEGVTSSVSGNATPASVRQSTQNDFSNSNI.

This sequence belongs to the TPT transporter family.

It localises to the membrane. In Schizosaccharomyces pombe (strain 972 / ATCC 24843) (Fission yeast), this protein is Putative transporter C83.11.